We begin with the raw amino-acid sequence, 177 residues long: Large ribosomal subunit protein uL6 (177 aa).

A disordered region spans residues 151–177 (YRPPEPYKGKGIRYSDEHVVRKEAKKK). A compositionally biased stretch (basic and acidic residues) spans 155-177 (EPYKGKGIRYSDEHVVRKEAKKK).

The protein belongs to the universal ribosomal protein uL6 family. Part of the 50S ribosomal subunit.

This protein binds to the 23S rRNA, and is important in its secondary structure. It is located near the subunit interface in the base of the L7/L12 stalk, and near the tRNA binding site of the peptidyltransferase center. In Psychrobacter sp. (strain PRwf-1), this protein is Large ribosomal subunit protein uL6.